The primary structure comprises 66 residues: Large ribosomal subunit protein bL31 (66 aa).

Cys16, Cys18, Cys36, and Cys39 together coordinate Zn(2+).

This sequence belongs to the bacterial ribosomal protein bL31 family. Type A subfamily. In terms of assembly, part of the 50S ribosomal subunit. Requires Zn(2+) as cofactor.

In terms of biological role, binds the 23S rRNA. The protein is Large ribosomal subunit protein bL31 of Moorella thermoacetica (strain ATCC 39073 / JCM 9320).